The sequence spans 461 residues: Secreted 45 kDa protein (461 aa).

The N-terminal stretch at 1–27 (MKKKIISAILMSTVILSAAAPLSGVYA) is a signal peptide. Over residues 264 to 329 (SSASASSSQA…GNTNSGTSTG (66 aa)) the composition is skewed to low complexity. Positions 264–343 (SSASASSSQA…TTTGGSGINS (80 aa)) are disordered. The span at 330–340 (NTGGTTTGGSG) shows a compositional bias: gly residues. Positions 330–459 (NTGGTTTGGS…VSASGVTFLM (130 aa)) constitute a Peptidase C51 domain.

The polypeptide is Secreted 45 kDa protein (usp45) (Lactococcus lactis subsp. cremoris (strain MG1363)).